The sequence spans 367 residues: Putative S-adenosyl-L-methionine-dependent methyltransferase MT0751 (367 aa).

S-adenosyl-L-methionine-binding positions include aspartate 137 and 166–167 (DL). The segment covering 348 to 358 (TRSDAHQASTT) has biased composition (polar residues). The interval 348-367 (TRSDAHQASTTAPPPPGLTG) is disordered.

Belongs to the UPF0677 family.

Functionally, exhibits S-adenosyl-L-methionine-dependent methyltransferase activity. This is Putative S-adenosyl-L-methionine-dependent methyltransferase MT0751 from Mycobacterium tuberculosis (strain CDC 1551 / Oshkosh).